The chain runs to 604 residues: ATPase family AAA domain-containing protein 3A homolog (604 aa).

The tract at residues 1–50 is disordered; the sequence is MSWLLGRNRQQPQPDQTAGFSEGGGAADPEGRTAGEKSGDSQLSRAERKA. Over residues 8 to 19 the composition is skewed to polar residues; sequence NRQQPQPDQTAG. The span at 29–50 shows a compositional bias: basic and acidic residues; sequence PEGRTAGEKSGDSQLSRAERKA. Residues 62-221 adopt a coiled-coil conformation; the sequence is ERAADAAKTL…INLEKIRLKA (160 aa). Residue 358–365 coordinates ATP; the sequence is GPPGTGKT.

Can form homooligomers.

The protein localises to the mitochondrion inner membrane. It is found in the mitochondrion matrix. Its subcellular location is the mitochondrion nucleoid. In terms of biological role, required to maintain the proper number of mitochondria in neurons and muscles. The chain is ATPase family AAA domain-containing protein 3A homolog from Drosophila melanogaster (Fruit fly).